We begin with the raw amino-acid sequence, 98 residues long: Large ribosomal subunit protein bL28 (98 aa).

This sequence belongs to the bacterial ribosomal protein bL28 family.

This chain is Large ribosomal subunit protein bL28, found in Bartonella bacilliformis (strain ATCC 35685 / KC583 / Herrer 020/F12,63).